Reading from the N-terminus, the 356-residue chain is Heat-inducible transcription repressor HrcA (356 aa).

This sequence belongs to the HrcA family.

Negative regulator of class I heat shock genes (grpE-dnaK-dnaJ and groELS operons). Prevents heat-shock induction of these operons. This chain is Heat-inducible transcription repressor HrcA, found in Brucella abortus (strain S19).